The primary structure comprises 931 residues: Protein unc-45 homolog B (931 aa).

TPR repeat units follow at residues 6-39 (AVQLKEEGNRHFQLQDYKAATNSYSQALKLTKDK), 43-76 (ATLYRNRAACGLKTESYVQAASDASRAIDINSSD), and 77-110 (IKALYRRCQALEHLGKLDQAFKDVQRCATLEPRN). 3 ARM repeats span residues 169 to 208 (EAGAEKIFQNNGVALLLQLLDTKKPELVLAAVRTLSGMCS), 211 to 250 (QARATVILHAVRIDRICSLMAVENEEMSLAVCNLLQAIID), and 751 to 790 (DKLRQKIFKERALPDIENYMFENHDQLRQAATECMCNMVL).

Interacts with HSP90 in an ATP-independent manner. Interacts with UBE4B; the interaction may target UNC45B for proteasomal degradation. As to expression, expressed in eye lens tissues. Expressed in muscle (at protein level).

It is found in the cytoplasm. Its subcellular location is the myofibril. The protein resides in the sarcomere. The protein localises to the z line. It localises to the a band. It is found in the perinuclear region. Its subcellular location is the cytosol. Acts as a co-chaperone for HSP90 and is required for proper folding of the myosin motor domain. Plays a role in sarcomere formation during muscle cell development. Is necessary for normal early lens development. The chain is Protein unc-45 homolog B from Homo sapiens (Human).